The chain runs to 152 residues: Proteolipid protein 2 (152 aa).

The MARVEL domain maps to 19–137 (FSRTRKGILL…DAYFTFPLRQ (119 aa)). A run of 3 helical transmembrane segments spans residues 25-45 (GILL…FSAG), 48-68 (GYSS…VIYM), and 85-105 (FFRT…VLVE). N108 is a glycosylation site (N-linked (GlcNAc...) asparagine). A helical transmembrane segment spans residues 112-132 (IAAGVLGLLATCLFGYDAYFT).

It is found in the membrane. Functionally, may play a role in cell differentiation in the intestinal epithelium. This chain is Proteolipid protein 2 (PLP2), found in Oryctolagus cuniculus (Rabbit).